The primary structure comprises 502 residues: Membrane-bound lytic murein transglycosylase F (502 aa).

The N-terminal stretch at methionine 1–leucine 33 is a signal peptide. Residues glutamine 34–leucine 264 are non-LT domain. The segment at aspartate 265–leucine 502 is LT domain. Glutamate 311 is a catalytic residue. The tract at residues proline 457 to leucine 502 is disordered. The span at proline 479–proline 493 shows a compositional bias: basic and acidic residues.

It in the N-terminal section; belongs to the bacterial solute-binding protein 3 family. The protein in the C-terminal section; belongs to the transglycosylase Slt family.

The protein resides in the cell outer membrane. It catalyses the reaction Exolytic cleavage of the (1-&gt;4)-beta-glycosidic linkage between N-acetylmuramic acid (MurNAc) and N-acetylglucosamine (GlcNAc) residues in peptidoglycan, from either the reducing or the non-reducing ends of the peptidoglycan chains, with concomitant formation of a 1,6-anhydrobond in the MurNAc residue.. In terms of biological role, murein-degrading enzyme that degrades murein glycan strands and insoluble, high-molecular weight murein sacculi, with the concomitant formation of a 1,6-anhydromuramoyl product. Lytic transglycosylases (LTs) play an integral role in the metabolism of the peptidoglycan (PG) sacculus. Their lytic action creates space within the PG sacculus to allow for its expansion as well as for the insertion of various structures such as secretion systems and flagella. This Marinobacter nauticus (strain ATCC 700491 / DSM 11845 / VT8) (Marinobacter aquaeolei) protein is Membrane-bound lytic murein transglycosylase F.